A 362-amino-acid chain; its full sequence is 2-oxoglutarate-dependent dioxygenase lolO1 (362 aa).

The Fe2OG dioxygenase domain maps to 199-312; that stretch reads TWNYFLGQPV…RYSLVFFGHL (114 aa). Histidine 222, aspartate 224, and histidine 280 together coordinate Fe cation. Arginine 303 contributes to the 2-oxoglutarate binding site.

Belongs to the iron/ascorbate-dependent oxidoreductase family. Fe(2+) is required as a cofactor.

It participates in alkaloid biosynthesis. Functionally, 2-oxoglutarate-dependent dioxygenase; part of the gene cluster that mediates the biosynthesis of loline alkaloids, potent insecticidal agents composed of a pyrrolizidine ring system and an uncommon ether bridge linking carbons 2 and 7. Lolines are structurally differentiated by the various modifications of the L-amino group and include norloline, loline, N-methylloline, N-acetylloline, N-acetylnorloline, and N-formylloline. The first committed step is the condensation of O-acetyl-L-homoserine (derived from L-aspartic acid) and L-proline, probably catalyzed by the gamma-type pyridoxal 5'-phosphate(PLP)-dependent enzyme lolC, to give the diamino diacid, NACPP. Ensuing cyclization, decarboxylation, and acetylation steps yield 1-exo-acetamidopyrrolizidine (AcAP). LolO is required for installation of the ether bridge upon the pathway intermediate, 1-exo-acetamidopyrrolizidine (AcAP). In sequential 2-oxoglutarate- and O(2)-consuming steps, lolO removes hydrogens from C2 and C7 of AcAP to form both carbon-oxygen bonds in N-acetylnorloline (NANL), the precursor to all other lolines. The enzymes lolD, lolE, lolF and lolT have also been proposed to be involved in the ether-bridge installation. Further processing of the exocyclic moiety of NANL by fungal N-acetamidase (LolN), methyltransferase (LolM), and cytochrome P450 (LolP) enzymes, with occasional involvement of a plant acetyltransferase, generates the other known lolines. LolN transforms NANL to norlonine which is monomethylated and dimethylated to respectively lonine and N-methyllonine (NML) by lolM. LolP catalyzes hydroxylation of the methyl group in N-methylloline (NML) and further oxygenation to N-formylloline (NFL). A plant acetyltransferase is responsible for the acetylation of loline to form N-acetylloline (NAL). LolA might interact with aspartate kinase to prevent feedback inhibition of its activity by these end products and thereby promote production of l-homoserine from l-aspartate. This Epichloe uncinata (Endophyte fungus) protein is 2-oxoglutarate-dependent dioxygenase lolO1.